The sequence spans 130 residues: Small ribosomal subunit protein uS11 (130 aa).

Belongs to the universal ribosomal protein uS11 family. Part of the 30S ribosomal subunit. Interacts with proteins S7 and S18. Binds to IF-3.

In terms of biological role, located on the platform of the 30S subunit, it bridges several disparate RNA helices of the 16S rRNA. Forms part of the Shine-Dalgarno cleft in the 70S ribosome. This chain is Small ribosomal subunit protein uS11, found in Nautilia profundicola (strain ATCC BAA-1463 / DSM 18972 / AmH).